Reading from the N-terminus, the 225-residue chain is Small ribosomal subunit protein uS3 (225 aa).

The region spanning 38 to 106 is the KH type-2 domain; the sequence is IRRFLQKKFK…PIGMNIIEVK (69 aa).

This sequence belongs to the universal ribosomal protein uS3 family. In terms of assembly, part of the 30S ribosomal subunit. Forms a tight complex with proteins S10 and S14.

Binds the lower part of the 30S subunit head. Binds mRNA in the 70S ribosome, positioning it for translation. In Leptospira biflexa serovar Patoc (strain Patoc 1 / Ames), this protein is Small ribosomal subunit protein uS3.